The following is an 884-amino-acid chain: Valine--tRNA ligase (884 aa).

The short motif at 46-56 (PNVTGKLHLGH) is the 'HIGH' region element. A 'KMSKS' region motif is present at residues 520-524 (KMSKS). Lys-523 provides a ligand contact to ATP. A coiled-coil region spans residues 809 to 844 (LADLLNVEEELARLEKELAKWQKELNMVGKKLSNER).

This sequence belongs to the class-I aminoacyl-tRNA synthetase family. ValS type 1 subfamily. Monomer.

The protein resides in the cytoplasm. It carries out the reaction tRNA(Val) + L-valine + ATP = L-valyl-tRNA(Val) + AMP + diphosphate. Catalyzes the attachment of valine to tRNA(Val). As ValRS can inadvertently accommodate and process structurally similar amino acids such as threonine, to avoid such errors, it has a 'posttransfer' editing activity that hydrolyzes mischarged Thr-tRNA(Val) in a tRNA-dependent manner. The polypeptide is Valine--tRNA ligase (Streptococcus agalactiae serotype Ia (strain ATCC 27591 / A909 / CDC SS700)).